A 612-amino-acid polypeptide reads, in one-letter code: Actin-binding LIM protein 2 (612 aa).

4 LIM zinc-binding domains span residues 22–81 (ILCN…LYGT), 81–141 (TRCF…TLVG), 151–210 (RSCG…KFGI), and 210–270 (IRCD…ARTE). The Zn(2+) site is built by C83, C86, H103, C106, C109, C112, C131, and C134. Zn(2+) contacts are provided by C212, C215, H232, C235, C238, C241, H260, and C263. Residues 269 to 278 (TEDKSKETRT) show a composition bias toward basic and acidic residues. Disordered regions lie at residues 269 to 295 (TEDKSKETRTSSESIVSVPASSTSGSP) and 341 to 433 (AVGD…DNIY). Composition is skewed to low complexity over residues 279 to 295 (SSESIVSVPASSTSGSP) and 364 to 373 (SSPSSAGSVS). Phosphoserine is present on residues S282, S294, S365, and S368. The span at 394–416 (SGRSTPSLSVHSDSRPPSSTYQQ) shows a compositional bias: polar residues. At S453 the chain carries Phosphoserine. A disordered region spans residues 471–520 (ADTRTNSPDLDSQSLSLSSGADQEPLQRMPGDSLYSRFPYSKPDTLPGPR). T473 bears the Phosphothreonine mark. A phosphoserine mark is found at S477 and S579. The segment covering 477–489 (SPDLDSQSLSLSS) has biased composition (low complexity). An HP domain is found at 544-612 (TREYKIYPYD…NDLKKKALLF (69 aa)).

As to quaternary structure, interacts with F-actin and ABRA.

The protein resides in the cytoplasm. In terms of biological role, may act as scaffold protein. May stimulate ABRA activity and ABRA-dependent SRF transcriptional activity. In Rattus norvegicus (Rat), this protein is Actin-binding LIM protein 2 (Ablim2).